A 295-amino-acid chain; its full sequence is ATP synthase gamma chain (295 aa).

Belongs to the ATPase gamma chain family. F-type ATPases have 2 components, CF(1) - the catalytic core - and CF(0) - the membrane proton channel. CF(1) has five subunits: alpha(3), beta(3), gamma(1), delta(1), epsilon(1). CF(0) has three main subunits: a, b and c.

It is found in the cell inner membrane. Produces ATP from ADP in the presence of a proton gradient across the membrane. The gamma chain is believed to be important in regulating ATPase activity and the flow of protons through the CF(0) complex. This chain is ATP synthase gamma chain, found in Sulfurimonas denitrificans (strain ATCC 33889 / DSM 1251) (Thiomicrospira denitrificans (strain ATCC 33889 / DSM 1251)).